A 74-amino-acid chain; its full sequence is Defensin (74 aa).

An N-terminal signal peptide occupies residues 1–22 (MRGLCICLVFLLVCGLVSATAA). The propeptide occupies 23–36 (APAESEVAHLRVRR). Cystine bridges form between Cys40–Cys61, Cys47–Cys69, and Cys51–Cys71.

As to expression, hemolymph.

Its subcellular location is the secreted. In terms of biological role, antibacterial activity against Gram-positive and Gram-negative bacteria. This Dermacentor variabilis (American dog tick) protein is Defensin (VSNA1).